We begin with the raw amino-acid sequence, 417 residues long: Spermidine/putrescine import ATP-binding protein PotA (417 aa).

Residues 5 to 308 enclose the ABC transporter domain; it reads IILKDLTKVF…PANRFVAQFV (304 aa). ATP is bound at residue 37–44; it reads GPSGCGKT. The tract at residues 105–177 is insert; it reads DFNSKIKANL…TALKCKKINK (73 aa).

This sequence belongs to the ABC transporter superfamily. Spermidine/putrescine importer (TC 3.A.1.11.1) family. In terms of assembly, the complex is composed of two ATP-binding proteins (PotA), two transmembrane proteins (PotB and PotC) and a solute-binding protein (PotD).

It localises to the cell membrane. It carries out the reaction ATP + H2O + polyamine-[polyamine-binding protein]Side 1 = ADP + phosphate + polyamineSide 2 + [polyamine-binding protein]Side 1.. Part of the ABC transporter complex PotABCD involved in spermidine/putrescine import. Responsible for energy coupling to the transport system. In Onion yellows phytoplasma (strain OY-M), this protein is Spermidine/putrescine import ATP-binding protein PotA.